The primary structure comprises 1458 residues: MSGADVESYIFPRIREILTGGISGIREAYINELRVCEKLIQWRNGSDNQVDSTNDASVKGMVFHRVSERNELQNRYAGLYDDLFKLNNNNVDIDVITKHDETIDKIISKELKSKMWYELNDEDIHSSLLPEFQIQTLDDYYDNMKKYLSQDDRDEKGNDNREEEDVKNRNDNVTRIQWQTLMEKDRKVKLHDDLSFSNEVETSLSTYINLRTKEEMDPRYVYHPVPALFITLTLLKVLTGGKAFSYGVRYLEKLCKTISKGERSLATYPAIFGSNGELVATRLYSHYAIKMRLILNNMTYLLTYKSCHEFKDFYIDVNDEVLLYMLENPNGGRDLKKAVTRLNLYYGLRYNPKTTDSLKIIDGVDYHHEHPKYSDRSYDAPIIEPENHFSASEQCYEHNAKLLNQAVYSKTVKEYIDSDIKKVKDLNLPLLTKFTEKLVDMRCNKSIIYDIVFMRTLLNMGGYSRSNQITDFKGTIDDITKMNDEYLSDVSEGGKRAKMSEWMYPKMEACGYGLTKSILNGQMVGVSYPSASESKAHIESYITPNSAGIGNLRFDVDVGGKMYKVRTTSKSAFVNALGTNIFNIDTISMEPMFLSEYLTHLNQDEKMLLYDRRKNRQIQDIELMRLCGQNVIGSRSTTAWRPVRPIYINVIQAHLAQAFIIGPHINATVGRQRTPPKGLWFTGEDVGIGFATIYQNGTSDVISHAIEASASGRCLSVLADCSSWDQTFLTESIIPYYQGIKRAISEFGQADSENYYMYDNQRKDVVGMRLTETIDWFNEYQKKRIFNASYLGERYSFKVQYMWSGRLDTFFMNSVQNALITERIANQVSSSVAGSPSLVWFQVAGDDAIMVYNANSITSSDQVDAIRKTVVDEYTADNHIINPQKTVISHISGEYAKIYYYAGMHFRDPSIQLHESEKISKATNITEVMRGYAQVAFEYNKRAIGSLRINSLYARLLASLAYSINVKRSDDESIENKPNRRGSKAKARSTKTNNLRSFSSVKYYPPLTSVITPTGVKGGLGMSLSGISLNEILMIKELLLDLVEAGLKIVDQVSFEQNEIVSKSLMRHFLRDRKDLIKEMGLDKGTKPVMAVRYRSSDSAFSSGNFENGISMRLESLDSHKLSIARQSEAKLKSVGVNLPKMYTYENLPYSTINQSLKGITIDKDLSRMTNSDLVDQLRSIPESECKGNLISKYPVYGLFNARRIISMDEKVDNPIRYISTPDEGKALERLIGSRTGIQFKNQGYGGSPAIVRFIRRNGLTITEENLIDLVISSGAISLANPKQNMIELFQAISGDQQSSLELANFFMNEKPHWEDKAISITINGSILENCDSRISNISRFVSIDAIRIPGDIKKMFTYIAYVYMCQMFILDENTPSKIHISINEEQLRDFLISAKPISKNRMKQTIDMKFSNQNSGVTIEIDEESLSRTADLDYEVLKLVHPLSVPFLRNLSEGSPM.

A disordered region spans residues 148 to 168 (LSQDDRDEKGNDNREEEDVKN). The region spanning 686 to 894 (VGIGFATIYQ…KTVISHISGE (209 aa)) is the RdRp catalytic domain. The interval 971 to 993 (DESIENKPNRRGSKAKARSTKTN) is disordered. Positions 979–989 (NRRGSKAKARS) are enriched in basic residues.

Belongs to the reoviridae RNA-directed RNA polymerase family.

The protein resides in the virion. It is found in the host cytoplasm. The enzyme catalyses RNA(n) + a ribonucleoside 5'-triphosphate = RNA(n+1) + diphosphate. In terms of biological role, RNA-directed RNA polymerase that is involved in both transcription and genome replication. Together with the capping enzyme P5 and protein P7, forms an enzyme complex positioned near the channels situated at each of the five-fold vertices of the core. The protein is RNA-directed RNA polymerase P1 of Nephotettix cincticeps (Green rice leafhopper).